Consider the following 147-residue polypeptide: uncharacterized protein (147 aa).

This is an uncharacterized protein from Mycobacterium tuberculosis (strain CDC 1551 / Oshkosh).